The primary structure comprises 210 residues: Small ribosomal subunit protein bS6 (210 aa).

Residues 99-210 (PLPTKRNTKS…KDTKEVKEEG (112 aa)) are disordered. Basic and acidic residues predominate over residues 120–210 (NDTKEVKEAK…KDTKEVKEEG (91 aa)).

This sequence belongs to the bacterial ribosomal protein bS6 family.

Functionally, binds together with bS18 to 16S ribosomal RNA. In Prochlorococcus marinus (strain SARG / CCMP1375 / SS120), this protein is Small ribosomal subunit protein bS6.